The following is a 109-amino-acid chain: Small ribosomal subunit protein uS10 (109 aa).

This sequence belongs to the universal ribosomal protein uS10 family. Part of the 30S ribosomal subunit.

Functionally, involved in the binding of tRNA to the ribosomes. The polypeptide is Small ribosomal subunit protein uS10 (Koribacter versatilis (strain Ellin345)).